Consider the following 434-residue polypeptide: F-box only protein 15 (434 aa).

An F-box domain is found at 1 to 41; it reads MPSEILLKIFSYLDAVSLLCAGCVSRRFYHLANDNFIWIRI.

In terms of assembly, directly interacts with SKP1 and CUL1.

In terms of biological role, substrate-recognition component of the SCF (SKP1-CUL1-F-box protein)-type E3 ubiquitin ligase complex. In Macaca fascicularis (Crab-eating macaque), this protein is F-box only protein 15 (FBXO15).